Reading from the N-terminus, the 340-residue chain is Mitochondrial carrier protein CoAc1 (340 aa).

6 helical membrane-spanning segments follow: residues 22 to 42, 85 to 105, 130 to 147, 199 to 219, 237 to 257, and 297 to 317; these read ALDL…AGAF, FYKG…LHYM, LLAG…TYPL, GVGP…YIYE, LSCG…LDVV, and FAGL…GFTT. 3 Solcar repeats span residues 27–113, 124–224, and 231–324; these read PVYA…YRCW, TGPV…LKSQ, and DSVI…MKAL.

The protein belongs to the mitochondrial carrier (TC 2.A.29) family. Expressed throughout the plant.

It is found in the mitochondrion inner membrane. Its function is as follows. Required for the accumulation of coenzyme A in the mitochondrial matrix. The polypeptide is Mitochondrial carrier protein CoAc1 (Zea mays (Maize)).